The following is a 118-amino-acid chain: Putative pterin-4-alpha-carbinolamine dehydratase (118 aa).

The protein belongs to the pterin-4-alpha-carbinolamine dehydratase family.

The catalysed reaction is (4aS,6R)-4a-hydroxy-L-erythro-5,6,7,8-tetrahydrobiopterin = (6R)-L-erythro-6,7-dihydrobiopterin + H2O. The polypeptide is Putative pterin-4-alpha-carbinolamine dehydratase (Stutzerimonas stutzeri (strain A1501) (Pseudomonas stutzeri)).